Consider the following 397-residue polypeptide: Argininosuccinate synthase (397 aa).

8 to 16 (AYSGGLDTS) serves as a coordination point for ATP. L-citrulline contacts are provided by Tyr86 and Ser91. Gly116 is an ATP binding site. 3 residues coordinate L-aspartate: Thr118, Asn122, and Asp123. L-citrulline is bound at residue Asn122. L-citrulline contacts are provided by Arg126, Ser175, Ser184, Glu260, and Tyr272.

Belongs to the argininosuccinate synthase family. Type 1 subfamily. Homotetramer.

Its subcellular location is the cytoplasm. The catalysed reaction is L-citrulline + L-aspartate + ATP = 2-(N(omega)-L-arginino)succinate + AMP + diphosphate + H(+). It functions in the pathway amino-acid biosynthesis; L-arginine biosynthesis; L-arginine from L-ornithine and carbamoyl phosphate: step 2/3. The chain is Argininosuccinate synthase from Clostridium botulinum (strain 657 / Type Ba4).